The sequence spans 131 residues: D-ribose pyranase (131 aa).

H20 serves as the catalytic Proton donor. Substrate is bound by residues D28, H98, and 120-122 (YSN).

Belongs to the RbsD / FucU family. RbsD subfamily. As to quaternary structure, homodecamer.

The protein resides in the cytoplasm. The catalysed reaction is beta-D-ribopyranose = beta-D-ribofuranose. It functions in the pathway carbohydrate metabolism; D-ribose degradation; D-ribose 5-phosphate from beta-D-ribopyranose: step 1/2. In terms of biological role, catalyzes the interconversion of beta-pyran and beta-furan forms of D-ribose. The protein is D-ribose pyranase of Limosilactobacillus fermentum (strain NBRC 3956 / LMG 18251) (Lactobacillus fermentum).